The sequence spans 239 residues: Ribosomal RNA small subunit methyltransferase G (239 aa).

S-adenosyl-L-methionine-binding positions include Gly77, Phe82, 128–129 (AE), and Arg146. A disordered region spans residues 217-239 (RRQTSKKYPRKPGTPNKSPLVES).

This sequence belongs to the methyltransferase superfamily. RNA methyltransferase RsmG family.

It is found in the cytoplasm. In terms of biological role, specifically methylates the N7 position of guanine in position 535 of 16S rRNA. In Staphylococcus epidermidis (strain ATCC 12228 / FDA PCI 1200), this protein is Ribosomal RNA small subunit methyltransferase G.